The primary structure comprises 157 residues: Endoribonuclease YbeY (157 aa).

Positions 114, 118, and 124 each coordinate Zn(2+).

Belongs to the endoribonuclease YbeY family. Requires Zn(2+) as cofactor.

It is found in the cytoplasm. Functionally, single strand-specific metallo-endoribonuclease involved in late-stage 70S ribosome quality control and in maturation of the 3' terminus of the 16S rRNA. The sequence is that of Endoribonuclease YbeY from Salmonella paratyphi A (strain AKU_12601).